We begin with the raw amino-acid sequence, 277 residues long: Thymidylate synthase (277 aa).

Arginine 21 provides a ligand contact to dUMP. A (6R)-5,10-methylene-5,6,7,8-tetrahydrofolate-binding site is contributed by histidine 51. 139 to 140 contacts dUMP; it reads RR. Cysteine 159 (nucleophile) is an active-site residue. Residues 179–182, asparagine 190, and 220–222 contribute to the dUMP site; these read RSAD and HIY. Residue aspartate 182 coordinates (6R)-5,10-methylene-5,6,7,8-tetrahydrofolate. Alanine 276 is a binding site for (6R)-5,10-methylene-5,6,7,8-tetrahydrofolate.

Belongs to the thymidylate synthase family. Bacterial-type ThyA subfamily. Homodimer.

The protein localises to the cytoplasm. The enzyme catalyses dUMP + (6R)-5,10-methylene-5,6,7,8-tetrahydrofolate = 7,8-dihydrofolate + dTMP. It functions in the pathway pyrimidine metabolism; dTTP biosynthesis. In terms of biological role, catalyzes the reductive methylation of 2'-deoxyuridine-5'-monophosphate (dUMP) to 2'-deoxythymidine-5'-monophosphate (dTMP) while utilizing 5,10-methylenetetrahydrofolate (mTHF) as the methyl donor and reductant in the reaction, yielding dihydrofolate (DHF) as a by-product. This enzymatic reaction provides an intracellular de novo source of dTMP, an essential precursor for DNA biosynthesis. The chain is Thymidylate synthase from Ruegeria sp. (strain TM1040) (Silicibacter sp.).